Consider the following 524-residue polypeptide: Bifunctional purine biosynthesis protein PurH (524 aa).

The region spanning 1–144 (MTRRALVSVS…KNSAHVGVVV (144 aa)) is the MGS-like domain.

The protein belongs to the PurH family.

The enzyme catalyses (6R)-10-formyltetrahydrofolate + 5-amino-1-(5-phospho-beta-D-ribosyl)imidazole-4-carboxamide = 5-formamido-1-(5-phospho-D-ribosyl)imidazole-4-carboxamide + (6S)-5,6,7,8-tetrahydrofolate. It catalyses the reaction IMP + H2O = 5-formamido-1-(5-phospho-D-ribosyl)imidazole-4-carboxamide. The protein operates within purine metabolism; IMP biosynthesis via de novo pathway; 5-formamido-1-(5-phospho-D-ribosyl)imidazole-4-carboxamide from 5-amino-1-(5-phospho-D-ribosyl)imidazole-4-carboxamide (10-formyl THF route): step 1/1. It participates in purine metabolism; IMP biosynthesis via de novo pathway; IMP from 5-formamido-1-(5-phospho-D-ribosyl)imidazole-4-carboxamide: step 1/1. This chain is Bifunctional purine biosynthesis protein PurH, found in Anaeromyxobacter dehalogenans (strain 2CP-C).